Consider the following 1355-residue polypeptide: Ecdysone-induced protein 75B, isoform A (1355 aa).

Disordered stretches follow at residues 60 to 91, 126 to 228, 248 to 268, and 308 to 344; these read QHQPMHQLHHQHQHQHQHQQQAKSQQLKQQHS, RLKN…DSSY, ELEQQQTTGGSNAQQQVEAKP, and ATQQQQQQQQQHQHQQQRRDSSDSNCSLMSNSSNSSA. Residues 66–76 are compositionally biased toward basic residues; the sequence is QLHHQHQHQHQ. Low complexity-rich tracts occupy residues 77-91 and 143-179; these read HQQQAKSQQLKQQHS and TLVKTTTTSNSNSNNTQTTNSISQQQQQHQIVLQHQQ. Acidic residues predominate over residues 200–213; that stretch reads SGIDEDSPNSDEDC. Polar residues-rich tracts occupy residues 218-228 and 254-264; these read PAGTSLEDSSY and TTGGSNAQQQV. Composition is skewed to low complexity over residues 308–321 and 330–344; these read ATQQQQQQQQQHQH and DSNCSLMSNSSNSSA. Residues 384–474 constitute a DNA-binding region (nuclear receptor); sequence SQLNYLCQKF…VGMSRDAVRF (91 aa). Residues 387 to 421 form an NR C4-type; degenerate zinc finger; that stretch reads NYLCQKFDEKLDTALSNSSANTGRNTPAVTANEDA. An NR C4-type zinc finger spans residues 438 to 457; the sequence is CTKNQQCSILRINRNRCQYC. The NR LBD domain maps to 508–756; it reads DQPRLLAAVL…QQMWSMEDGN (249 aa). Disordered regions lie at residues 780 to 821, 927 to 964, 987 to 1007, 1051 to 1117, 1147 to 1260, and 1312 to 1344; these read KSPL…SALA, LDSPTDSGIESGNEKNECKAVSSGGSSSCSSPRSSVDD, VSVSPVRSPQPSTSSHLKRQI, AEAD…SSHS, ENST…SNSA, and TVTASNGGPPSAAASPAPSSSPPASVGSPNPGL. 5 stretches are compositionally biased toward low complexity: residues 797 to 809, 948 to 960, 987 to 1001, 1053 to 1098, and 1106 to 1117; these read GSPSSSQPQGVSL, SSGGSSSCSSPRS, VSVSPVRSPQPSTSS, ADAS…AQSQ, and SSPKASMASSHS. Polar residues-rich tracts occupy residues 1149 to 1162 and 1174 to 1196; these read STAASSTTNGVGNR and AVQNQQRWGSSSVITTTCQQRQQ. 3 stretches are compositionally biased toward low complexity: residues 1197 to 1233, 1242 to 1260, and 1315 to 1343; these read SVSPHSNGSSSSSSSSSSSSSSSSSTSSNCSSSSASS, STSNGTSAPASSSSGSNSA, and ASNGGPPSAAASPAPSSSPPASVGSPNPG.

It belongs to the nuclear hormone receptor family. NR1 subfamily.

The protein localises to the nucleus. In terms of biological role, implicated in the regulation of ecdysone-triggered gene hierarchies. Probably plays a key role in mediating the regulation of the larval molt by 20-OH-ecdysone. This Drosophila melanogaster (Fruit fly) protein is Ecdysone-induced protein 75B, isoform A (Eip75B).